The primary structure comprises 1007 residues: Tolloid-like protein 1 (1007 aa).

An N-terminal signal peptide occupies residues 1-25 (MNMPSWLIFLLTGWTFCGNFFACGG). Residues 26–142 (LDYDYPNYEN…GKSKKIRIPR (117 aa)) constitute a propeptide that is removed on maturation. The interval 115 to 139 (SGQENTTANSQKVDNNQSGKSKKIR) is disordered. The span at 116–133 (GQENTTANSQKVDNNQSG) shows a compositional bias: polar residues. A Peptidase M12A domain is found at 143–342 (AATSRTERIW…AQARKLYRCP (200 aa)). N-linked (GlcNAc...) asparagine glycosylation occurs at N164. 4 cysteine pairs are disulfide-bonded: C185–C341, C205–C227, C207–C208, and C344–C370. H235 serves as a coordination point for Zn(2+). The active site involves E236. The Zn(2+) site is built by H239 and H245. 2 consecutive CUB domains span residues 344–456 (CGET…YEAI) and 457–569 (CGGE…FLKE). N-linked (GlcNAc...) asparagine glycosylation is found at N354 and N385. Disulfide bonds link C397–C419, C457–C483, C510–C532, C573–C585, C581–C594, C596–C609, C613–C639, C666–C688, C729–C740, C736–C749, C751–C764, C769–C795, C822–C844, C882–C912, and C939–C961. One can recognise an EGF-like 1; calcium-binding domain in the interval 569-610 (EEDECARPDNGGCEQRCVNTLGSYKCSCDPGYELAPDKKSCE). The region spanning 613-725 (CGGLLTKLNG…KGFRAHFFSD (113 aa)) is the CUB 3 domain. Residue N621 is glycosylated (N-linked (GlcNAc...) asparagine). The EGF-like 2; calcium-binding domain maps to 725–765 (DKDECSKDNGGCQHECINTIGSYVCQCRNGFVLHDNKHDCK). 2 CUB domains span residues 769–881 (CEHR…HSTE) and 882–998 (CGGR…YRSV).

The cofactor is Zn(2+).

It localises to the secreted. Its function is as follows. Protease which processes procollagen C-propeptides, such as chordin. Required for the embryonic development. Predominant protease, which in the development, influences dorsal-ventral patterning and skeletogenesis. This chain is Tolloid-like protein 1 (tll1), found in Xenopus laevis (African clawed frog).